A 227-amino-acid polypeptide reads, in one-letter code: Ribonuclease 3 (227 aa).

The RNase III domain occupies 6 to 128 (ASDYQQRIGY…VIAAIYLDAD (123 aa)). Residue glutamate 41 participates in Mg(2+) binding. Residue aspartate 45 is part of the active site. Mg(2+) is bound by residues aspartate 114 and glutamate 117. Residue glutamate 117 is part of the active site. One can recognise a DRBM domain in the interval 155-225 (DPKTRLQEWL…ASHAIDQLDS (71 aa)). A compositionally biased stretch (basic and acidic residues) spans 203-212 (GEGSSRRLAE). The segment at 203–227 (GEGSSRRLAEQDAASHAIDQLDSNK) is disordered.

It belongs to the ribonuclease III family. In terms of assembly, homodimer. The cofactor is Mg(2+).

The protein resides in the cytoplasm. The catalysed reaction is Endonucleolytic cleavage to 5'-phosphomonoester.. Functionally, digests double-stranded RNA. Involved in the processing of primary rRNA transcript to yield the immediate precursors to the large and small rRNAs (23S and 16S). Processes some mRNAs, and tRNAs when they are encoded in the rRNA operon. Processes pre-crRNA and tracrRNA of type II CRISPR loci if present in the organism. This chain is Ribonuclease 3, found in Xylella fastidiosa (strain 9a5c).